The following is an 85-amino-acid chain: RNA-binding protein Hfq (85 aa).

Positions 9–68 (DPFLNALRRERIPVSIYLVNGIKLQGQVESFDQFVILLKNTVSQMVYKHAISTVVPARPV) constitute a Sm domain.

The protein belongs to the Hfq family. As to quaternary structure, homohexamer.

Functionally, RNA chaperone that binds small regulatory RNA (sRNAs) and mRNAs to facilitate mRNA translational regulation in response to envelope stress, environmental stress and changes in metabolite concentrations. Also binds with high specificity to tRNAs. In Tolumonas auensis (strain DSM 9187 / NBRC 110442 / TA 4), this protein is RNA-binding protein Hfq.